A 125-amino-acid chain; its full sequence is Small ribosomal subunit protein uS12 (125 aa).

At D89 the chain carries 3-methylthioaspartic acid.

Belongs to the universal ribosomal protein uS12 family. As to quaternary structure, part of the 30S ribosomal subunit. Contacts proteins S8 and S17. May interact with IF1 in the 30S initiation complex.

With S4 and S5 plays an important role in translational accuracy. Its function is as follows. Interacts with and stabilizes bases of the 16S rRNA that are involved in tRNA selection in the A site and with the mRNA backbone. Located at the interface of the 30S and 50S subunits, it traverses the body of the 30S subunit contacting proteins on the other side and probably holding the rRNA structure together. The combined cluster of proteins S8, S12 and S17 appears to hold together the shoulder and platform of the 30S subunit. The protein is Small ribosomal subunit protein uS12 of Cupriavidus metallidurans (strain ATCC 43123 / DSM 2839 / NBRC 102507 / CH34) (Ralstonia metallidurans).